The following is a 238-amino-acid chain: Aspartate/glutamate leucyltransferase (238 aa).

This sequence belongs to the R-transferase family. Bpt subfamily.

It localises to the cytoplasm. The catalysed reaction is N-terminal L-glutamyl-[protein] + L-leucyl-tRNA(Leu) = N-terminal L-leucyl-L-glutamyl-[protein] + tRNA(Leu) + H(+). It catalyses the reaction N-terminal L-aspartyl-[protein] + L-leucyl-tRNA(Leu) = N-terminal L-leucyl-L-aspartyl-[protein] + tRNA(Leu) + H(+). Functionally, functions in the N-end rule pathway of protein degradation where it conjugates Leu from its aminoacyl-tRNA to the N-termini of proteins containing an N-terminal aspartate or glutamate. The sequence is that of Aspartate/glutamate leucyltransferase from Aeromonas salmonicida (strain A449).